The following is a 115-amino-acid chain: Colicin-Ib immunity protein (115 aa).

A run of 3 helical transmembrane segments spans residues Val7–Gly27, Phe38–Ile58, and Ile87–Ile107.

It localises to the cell membrane. Its function is as follows. This protein is able to protect a cell, which harbors the plasmid IncI1 ColIb-P9 encoding colicin Ib, against colicin Ib. The polypeptide is Colicin-Ib immunity protein (Escherichia coli).